Consider the following 139-residue polypeptide: Large ribosomal subunit protein uL16 (139 aa).

It belongs to the universal ribosomal protein uL16 family. In terms of assembly, part of the 50S ribosomal subunit.

Functionally, binds 23S rRNA and is also seen to make contacts with the A and possibly P site tRNAs. The chain is Large ribosomal subunit protein uL16 from Picosynechococcus sp. (strain ATCC 27264 / PCC 7002 / PR-6) (Agmenellum quadruplicatum).